Reading from the N-terminus, the 109-residue chain is Aquaporin-2 (109 aa).

At 1–6 the chain is on the cytoplasmic side; the sequence is SIAFSR. A helical transmembrane segment spans residues 7–27; sequence AVFSEFLATLLFVFFGLGSAL. Topologically, residues 28–35 are extracellular; sequence NWPQALPS. A helical transmembrane segment spans residues 36 to 54; sequence VLQIAMAFGLAIGTLVQTL. Topologically, residues 55 to 59 are cytoplasmic; it reads GHISG. Residues 60–69 constitute an intramembrane region (discontinuously helical); that stretch reads AHINPAVTVA. The NPA 1 motif lies at 63–65; that stretch reads NPA. Residues 70-80 lie on the Cytoplasmic side of the membrane; the sequence is CLVGCHVSFLR. The chain crosses the membrane as a helical span at residues 81-102; sequence ATFYLAAQLLGAVAGAALLHEL. At 103 to 109 the chain is on the extracellular side; sequence TPPDIRG.

The protein belongs to the MIP/aquaporin (TC 1.A.8) family. As to quaternary structure, homotetramer. Serine phosphorylation is necessary and sufficient for expression at the apical membrane. Endocytosis is not phosphorylation-dependent. In terms of processing, N-glycosylated.

The protein localises to the apical cell membrane. Its subcellular location is the basolateral cell membrane. It localises to the cell membrane. The protein resides in the cytoplasmic vesicle membrane. It is found in the golgi apparatus. The protein localises to the trans-Golgi network membrane. The catalysed reaction is H2O(in) = H2O(out). It carries out the reaction glycerol(in) = glycerol(out). In terms of biological role, forms a water-specific channel that provides the plasma membranes of renal collecting duct with high permeability to water, thereby permitting water to move in the direction of an osmotic gradient. Plays an essential role in renal water homeostasis. Could also be permeable to glycerol. This is Aquaporin-2 from Elephas maximus (Indian elephant).